The primary structure comprises 118 residues: Large ribosomal subunit protein bL20 (118 aa).

This sequence belongs to the bacterial ribosomal protein bL20 family.

Binds directly to 23S ribosomal RNA and is necessary for the in vitro assembly process of the 50S ribosomal subunit. It is not involved in the protein synthesizing functions of that subunit. This is Large ribosomal subunit protein bL20 from Clostridioides difficile (strain 630) (Peptoclostridium difficile).